A 642-amino-acid polypeptide reads, in one-letter code: Threonine--tRNA ligase (642 aa).

The 61-residue stretch at 1–61 (MPVITLPDGS…ENDATLAIIT (61 aa)) folds into the TGS domain. Residues 243-534 (DHRKIGKQLD…LTEEFAGFFP (292 aa)) are catalytic. The Zn(2+) site is built by cysteine 334, histidine 385, and histidine 511.

The protein belongs to the class-II aminoacyl-tRNA synthetase family. As to quaternary structure, homodimer. The cofactor is Zn(2+).

It localises to the cytoplasm. The catalysed reaction is tRNA(Thr) + L-threonine + ATP = L-threonyl-tRNA(Thr) + AMP + diphosphate + H(+). Its function is as follows. Catalyzes the attachment of threonine to tRNA(Thr) in a two-step reaction: L-threonine is first activated by ATP to form Thr-AMP and then transferred to the acceptor end of tRNA(Thr). Also edits incorrectly charged L-seryl-tRNA(Thr). The protein is Threonine--tRNA ligase of Salmonella dublin (strain CT_02021853).